The sequence spans 331 residues: Glycerol-3-phosphate dehydrogenase [NAD(P)+] (331 aa).

Residues Trp11, Arg30, and Lys105 each contribute to the NADPH site. 3 residues coordinate sn-glycerol 3-phosphate: Lys105, Gly134, and Ser136. Residue Ala138 participates in NADPH binding. Lys189, Asp242, Ser252, Arg253, and Asn254 together coordinate sn-glycerol 3-phosphate. Lys189 functions as the Proton acceptor in the catalytic mechanism. Arg253 contacts NADPH. 2 residues coordinate NADPH: Val277 and Glu279.

This sequence belongs to the NAD-dependent glycerol-3-phosphate dehydrogenase family.

The protein localises to the cytoplasm. The catalysed reaction is sn-glycerol 3-phosphate + NAD(+) = dihydroxyacetone phosphate + NADH + H(+). It carries out the reaction sn-glycerol 3-phosphate + NADP(+) = dihydroxyacetone phosphate + NADPH + H(+). The protein operates within membrane lipid metabolism; glycerophospholipid metabolism. Catalyzes the reduction of the glycolytic intermediate dihydroxyacetone phosphate (DHAP) to sn-glycerol 3-phosphate (G3P), the key precursor for phospholipid synthesis. The polypeptide is Glycerol-3-phosphate dehydrogenase [NAD(P)+] (Janthinobacterium sp. (strain Marseille) (Minibacterium massiliensis)).